The chain runs to 443 residues: MSEMTPREIVSELNKHIIGQDNAKRSVAIALRNRWRRMQLDEELRHEVTPKNILMIGPTGVGKTEIARRLAKLANAPFIKVEATKFTEVGYVGKEVDSIIRDLTDAAVKMVRVQAIEKNRYRAEELAEERILDVLIPPAKNNWGQAEQQQEPSAARQTFRKKLREGQLDDKEIEINLAAAPMGVEIMAPPGMEEMTSQLQSIFQNLGGQKQKPRKLKIKDAMKLLVEEEAAKLVNPEELKQDAIDAVEQHGIVFIDEIDKICKRGETSGPDVSREGVQRDLLPLVEGCTVSTKHGMVKTDHILFIASGAFQVAKPSDLIPELQGRLPIRVELQALTTSDFERILTEPNASVTVQYKALMATEGVNIEFTDSGIKRIAEAAWQVNETTENIGARRLHTVLERLMEEISYNASDLHGQNITIDAEYVSKHLDALVADEDLSRFIL.

ATP-binding positions include I18, 60–65 (GVGKTE), D256, E321, and R393.

This sequence belongs to the ClpX chaperone family. HslU subfamily. A double ring-shaped homohexamer of HslV is capped on each side by a ring-shaped HslU homohexamer. The assembly of the HslU/HslV complex is dependent on binding of ATP.

The protein localises to the cytoplasm. Its function is as follows. ATPase subunit of a proteasome-like degradation complex; this subunit has chaperone activity. The binding of ATP and its subsequent hydrolysis by HslU are essential for unfolding of protein substrates subsequently hydrolyzed by HslV. HslU recognizes the N-terminal part of its protein substrates and unfolds these before they are guided to HslV for hydrolysis. This Salmonella typhi protein is ATP-dependent protease ATPase subunit HslU.